A 169-amino-acid chain; its full sequence is GTP-dependent dephospho-CoA kinase (169 aa).

The GTP site is built by D45, D64, K66, and E121.

This sequence belongs to the GTP-dependent DPCK family.

The catalysed reaction is 3'-dephospho-CoA + GTP = GDP + CoA + H(+). It functions in the pathway cofactor biosynthesis; coenzyme A biosynthesis. Catalyzes the GTP-dependent phosphorylation of the 3'-hydroxyl group of dephosphocoenzyme A to form coenzyme A (CoA). This is GTP-dependent dephospho-CoA kinase from Methanosphaera stadtmanae (strain ATCC 43021 / DSM 3091 / JCM 11832 / MCB-3).